We begin with the raw amino-acid sequence, 761 residues long: MLIQKILLNKEISRLPRILSILNYTGLRWLSGSSGRNTTELQRIFDDSKYWQSLSENTTQYTKETGLFKNPYLTSTDGLRQFSHDSLHKAHKLAEILRNSVSKEEKVHYIMNLDQLSDTLCRVIDLCEFLRSAHPDQSYVEAAQMCHEEMFEFMNVLNTDVVLCNKLKEVLEDPEILKVLSEEERKVGEILLDDFEKSGIYMKAGIREQFIELSQQISVIGQEFINNTDYVAKEFIKVKRDEMDKSGISPLLTARLNRDLTGKYYKIPTYGQIPLQILKSCPDEDIRKEVWAALHNCPKAQIQRLNQLVRLRVILSNLLGKQSYSDYQLDNKMAGSPENVKGFIKTLMNVTKPLAARELEFIARDKLNAPDSRHMSDNEILSIVKPWDKNYFSSKYDSDNEMAMIRDEQLRYYFSLGNVINGLSELFKRIYGITLQPSRTENGETWSPDVRRLDVISEEEGLVGVIYCDLFERVGKISNPAHFTVCCSRQVYPDENDFTTIQTGQNSDGTVFQLPVISLVCNFSTVALPNGNRTCFLHMNEIETLFHEMGHAMHSMLGRTRLQNISGTRCATDFVELPSILMEHFARDIRVLRTIGSHYETSEPAPEALLNDYLDKTQFLQHCETYSQAKMAMLDQKLHGSFSLSDIERIDSAKIYQKLETRLQVLADDESNWCGRFGHLFGYGATYYSYLFDRAIASKVWDSLFKDDPFNRTGGEKFKERVLKWGGLKNPWSCIADVLEKPDLAKGGAEAMTYIGDSEDL.

A mitochondrion-targeting transit peptide spans 1–37 (MLIQKILLNKEISRLPRILSILNYTGLRWLSGSSGRN). His-547 contacts Zn(2+). Glu-548 is an active-site residue. The Zn(2+) site is built by His-551 and His-554.

It belongs to the peptidase M3 family. Zn(2+) is required as a cofactor.

The protein localises to the mitochondrion matrix. It catalyses the reaction Release of an N-terminal octapeptide as second stage of processing of some proteins imported into the mitochondrion.. In terms of biological role, cleaves proteins, imported into the mitochondrion, to their mature size. While most mitochondrial precursor proteins are processed to the mature form in one step by mitochondrial processing peptidase (MPP), the sequential cleavage by MIP of an octapeptide after initial processing by MPP is a required step for a subgroup of nuclear-encoded precursor proteins destined for the matrix or the inner membrane. The protein is Mitochondrial intermediate peptidase (OCT1) of Candida glabrata (strain ATCC 2001 / BCRC 20586 / JCM 3761 / NBRC 0622 / NRRL Y-65 / CBS 138) (Yeast).